The chain runs to 337 residues: Nucleoid-associated protein HS_0228 (337 aa).

It belongs to the YejK family.

Its subcellular location is the cytoplasm. The protein localises to the nucleoid. This chain is Nucleoid-associated protein HS_0228, found in Histophilus somni (strain 129Pt) (Haemophilus somnus).